The primary structure comprises 86 residues: Cell division topological specificity factor (86 aa).

This sequence belongs to the MinE family.

Its function is as follows. Prevents the cell division inhibition by proteins MinC and MinD at internal division sites while permitting inhibition at polar sites. This ensures cell division at the proper site by restricting the formation of a division septum at the midpoint of the long axis of the cell. The protein is Cell division topological specificity factor of Shewanella pealeana (strain ATCC 700345 / ANG-SQ1).